A 593-amino-acid polypeptide reads, in one-letter code: Arginine--tRNA ligase (593 aa).

The short motif at 123-133 is the 'HIGH' region element; that stretch reads PNVAKPMHVGH.

The protein belongs to the class-I aminoacyl-tRNA synthetase family. In terms of assembly, monomer.

It is found in the cytoplasm. The catalysed reaction is tRNA(Arg) + L-arginine + ATP = L-arginyl-tRNA(Arg) + AMP + diphosphate. In Phenylobacterium zucineum (strain HLK1), this protein is Arginine--tRNA ligase.